The following is a 257-amino-acid chain: Adenylate kinase (257 aa).

52–57 (GAGKGT) is an ATP binding site. The tract at residues 72–101 (ATGDMLRSQVAKKTELGKEAKKIMDQGGLV) is NMP. Residues Thr-73, Arg-78, 99–101 (GLV), 128–131 (GFPR), and Gln-135 contribute to the AMP site. Positions 169 to 206 (GRLVHPASGRSYHKIFNPPKNDMKDDVTGEPLIQRSDD) are LID. ATP is bound by residues Arg-170 and 179–180 (SY). AMP contacts are provided by Arg-203 and Arg-214. Gln-242 serves as a coordination point for ATP.

It belongs to the adenylate kinase family. AK2 subfamily. As to quaternary structure, monomer.

It localises to the cytoplasm. It is found in the cytosol. The protein localises to the mitochondrion intermembrane space. It carries out the reaction AMP + ATP = 2 ADP. Functionally, catalyzes the reversible transfer of the terminal phosphate group between ATP and AMP. Plays an important role in cellular energy homeostasis and in adenine nucleotide metabolism. Adenylate kinase activity is critical for regulation of the phosphate utilization and the AMP de novo biosynthesis pathways. This is Adenylate kinase (adk1) from Aspergillus fumigatus (strain CBS 144.89 / FGSC A1163 / CEA10) (Neosartorya fumigata).